Here is a 207-residue protein sequence, read N- to C-terminus: Ras-related protein Rab-7a (207 aa).

Thr2 carries the N-acetylthreonine modification. Residues Ser17, Gly18, Val19, Gly20, Lys21, Thr22, Ser23, Ser34, Asn35, Tyr37, and Thr40 each coordinate GTP. A Mg(2+)-binding site is contributed by Thr22. A Switch 1 motif is present at residues 28-41 (YVNKKFSNQYKATI). Mg(2+) contacts are provided by Thr40 and Asp63. Position 66 (Gly66) interacts with GTP. A Switch 2 motif is present at residues 67-82 (QERFQSLGVAFYRGAD). A Phosphoserine modification is found at Ser72. Asn125, Lys126, Asp128, Ala156, and Lys157 together coordinate GTP. Glycyl lysine isopeptide (Lys-Gly) (interchain with G-Cter in ubiquitin) cross-links involve residues Lys191 and Lys194. S-geranylgeranyl cysteine attachment occurs at residues Cys205 and Cys207. Residue Cys207 is modified to Cysteine methyl ester.

This sequence belongs to the small GTPase superfamily. Rab family. In terms of assembly, interacts with NTRK1/TRKA. Interacts with RILP. Interacts with PSMA7. Interacts with RNF115. Interacts with FYCO1. Interacts with the PIK3C3/VPS34-PIK3R4 complex. The GTP-bound form interacts with OSBPL1A. The GTP-bound form interacts with RAC1. Interacts with CLN3. Interacts with CHM, the substrate-binding subunit of the Rab geranylgeranyltransferase complex. Interacts with C9orf72. Does not interact with HPS4 and the BLOC-3 complex (heterodimer of HPS1 and HPS4). Interacts with CLN5. Interacts with PLEKHM1 (via N- and C-terminus). Interacts with PRPH; the interaction is direct. Interacts with VPS13A. The GDP-bound form interacts with RIMOC1. Interacts with the MON1A-CCZ1B complex and this interaction is enhanced in the presence of RIMOC1. Interacts with VPS39 and VPS41. Forms a ternary complex with LAMP2 and RUFY4; the interaction with LAMP2 is mediated by RUFY4 (via RUN and coiled coil domains). Mg(2+) is required as a cofactor. Deubiquitination at Lys-191 and Lys-194 by USP32. Post-translationally, phosphorylated at Ser-72 by LRRK1; phosphorylation is dependent on protein kinase C (PKC) activation of LRRK1. In terms of processing, prenylated. Prenylation is required for association with cellular membranes.

It is found in the cytoplasmic vesicle. The protein resides in the phagosome membrane. Its subcellular location is the late endosome membrane. The protein localises to the lysosome membrane. It localises to the melanosome membrane. It is found in the autophagosome membrane. The protein resides in the lipid droplet. Its subcellular location is the endosome membrane. The protein localises to the mitochondrion membrane. The enzyme catalyses GTP + H2O = GDP + phosphate + H(+). Its activity is regulated as follows. Regulated by guanine nucleotide exchange factors (GEFs) which promote the exchange of bound GDP for free GTP. Regulated by GTPase activating proteins (GAPs) which increase the GTP hydrolysis activity. Inhibited by GDP dissociation inhibitors (GDIs). In terms of biological role, the small GTPases Rab are key regulators of intracellular membrane trafficking, from the formation of transport vesicles to their fusion with membranes. Rabs cycle between an inactive GDP-bound form and an active GTP-bound form that is able to recruit to membranes different sets of downstream effectors directly responsible for vesicle formation, movement, tethering and fusion. In its active state, RAB7A binds to a variety of effector proteins playing a key role in the regulation of endo-lysosomal trafficking. Governs early-to-late endosomal maturation, microtubule minus-end as well as plus-end directed endosomal migration and positioning, and endosome-lysosome transport through different protein-protein interaction cascades. Also plays a central role in growth-factor-mediated cell signaling, nutrient-transporter-mediated nutrient uptake, neurotrophin transport in the axons of neurons and lipid metabolism. Also involved in regulation of some specialized endosomal membrane trafficking, such as maturation of melanosomes, pathogen-induced phagosomes (or vacuoles) and autophagosomes. Plays a role in the maturation and acidification of phagosomes that engulf pathogens, such as S.aureus and Mycobacteria. Plays a role in the fusion of phagosomes with lysosomes. In concert with RAC1, plays a role in regulating the formation of RBs (ruffled borders) in osteoclasts. Controls the endosomal trafficking and neurite outgrowth signaling of NTRK1/TRKA. Regulates the endocytic trafficking of the EGF-EGFR complex by regulating its lysosomal degradation. Involved in the ADRB2-stimulated lipolysis through lipophagy, a cytosolic lipase-independent autophagic pathway. Required for the exosomal release of SDCBP, CD63 and syndecan. Required for vesicular trafficking and cell surface expression of ACE2. May play a role in PRPH neuronal intermediate filament assembly. This chain is Ras-related protein Rab-7a (RAB7A), found in Pongo abelii (Sumatran orangutan).